Reading from the N-terminus, the 357-residue chain is Ribosomal RNA large subunit methyltransferase M (357 aa).

S-adenosyl-L-methionine-binding positions include Ser183, 216-219 (APGG), Asp235, Asp255, and Asp271. Catalysis depends on Lys300, which acts as the Proton acceptor.

This sequence belongs to the class I-like SAM-binding methyltransferase superfamily. RNA methyltransferase RlmE family. RlmM subfamily. As to quaternary structure, monomer.

The protein resides in the cytoplasm. It catalyses the reaction cytidine(2498) in 23S rRNA + S-adenosyl-L-methionine = 2'-O-methylcytidine(2498) in 23S rRNA + S-adenosyl-L-homocysteine + H(+). Catalyzes the 2'-O-methylation at nucleotide C2498 in 23S rRNA. This Pseudomonas syringae pv. tomato (strain ATCC BAA-871 / DC3000) protein is Ribosomal RNA large subunit methyltransferase M.